The sequence spans 166 residues: Small ribosomal subunit protein uS5 (166 aa).

The region spanning 11 to 74 (LNEKLIAVNR…EKARRNMFTI (64 aa)) is the S5 DRBM domain.

This sequence belongs to the universal ribosomal protein uS5 family. In terms of assembly, part of the 30S ribosomal subunit. Contacts proteins S4 and S8.

In terms of biological role, with S4 and S12 plays an important role in translational accuracy. Its function is as follows. Located at the back of the 30S subunit body where it stabilizes the conformation of the head with respect to the body. In Aliivibrio salmonicida (strain LFI1238) (Vibrio salmonicida (strain LFI1238)), this protein is Small ribosomal subunit protein uS5.